The chain runs to 745 residues: GTPase-activating protein GYP7 (745 aa).

The 233-residue stretch at 391 to 623 folds into the Rab-GAP TBC domain; that stretch reads LADDATRKEV…NIWEVFFTDF (233 aa).

Its function is as follows. Most effectively accelerate the intrinsic GTPase activity of YPT7. It is also active, but to a lesser extent, on YPT31, YPT32 and YPT1. YPT6 and SEC4. The chain is GTPase-activating protein GYP7 (GYP7) from Candida glabrata (strain ATCC 2001 / BCRC 20586 / JCM 3761 / NBRC 0622 / NRRL Y-65 / CBS 138) (Yeast).